Reading from the N-terminus, the 175-residue chain is Ribosome maturation factor RimM (175 aa).

A PRC barrel domain is found at 97–170 (NGQYYWTDVL…YLYVDWQMAW (74 aa)).

It belongs to the RimM family. As to quaternary structure, binds ribosomal protein uS19.

The protein localises to the cytoplasm. An accessory protein needed during the final step in the assembly of 30S ribosomal subunit, possibly for assembly of the head region. Essential for efficient processing of 16S rRNA. May be needed both before and after RbfA during the maturation of 16S rRNA. It has affinity for free ribosomal 30S subunits but not for 70S ribosomes. This chain is Ribosome maturation factor RimM, found in Dichelobacter nodosus (strain VCS1703A).